Here is a 229-residue protein sequence, read N- to C-terminus: MAKKSKQMRAALEKVDSTKAYSVEEAVALAKETNFAKFDASVEVAYNLNIDVRKADQQIRGAMVLPNGTGKTQRVLVFARGAKAEEAKAAGADFVGEDDLVAKINGGWLDFDVVIATPDMMAIVGRLGRVLGPRNLMPNPKTGTVTMDVAKAVEESKGGKITYRADKAGNVQAIIGKVSFDADKLVENFKAFHEVMVKAKPATAKGTYMTNVSITTTQGVGIKVDPSSF.

This sequence belongs to the universal ribosomal protein uL1 family. Part of the 50S ribosomal subunit.

Its function is as follows. Binds directly to 23S rRNA. The L1 stalk is quite mobile in the ribosome, and is involved in E site tRNA release. In terms of biological role, protein L1 is also a translational repressor protein, it controls the translation of the L11 operon by binding to its mRNA. This Streptococcus equi subsp. equi (strain 4047) protein is Large ribosomal subunit protein uL1.